Here is a 189-residue protein sequence, read N- to C-terminus: Large ribosomal subunit protein eL18 (189 aa).

The protein belongs to the eukaryotic ribosomal protein eL18 family.

The protein resides in the cytoplasm. The chain is Large ribosomal subunit protein eL18 (RpL18) from Aedes aegypti (Yellowfever mosquito).